We begin with the raw amino-acid sequence, 172 residues long: Type VI secretion system sheath protein TssB1 (172 aa).

As to quaternary structure, forms a heterodimer with TssC1. Heterodimers assemble to form the sheath of the T6SS machinery. Interacts with TagJ. Interacts with TssA1.

In terms of biological role, core component of the H1 type VI (H1-T6SS) secretion system that plays a role in the release of toxins targeting both eukaryotic and prokaryotic species. Forms the sheath of the structure by assembling into tubules together with TssC1 resulting in the stacking of cogwheel-like structures showing predominantly a 12-fold symmetry. The sheath contracts to provide the energy needed for effector delivery. The sequence is that of Type VI secretion system sheath protein TssB1 from Pseudomonas aeruginosa (strain ATCC 15692 / DSM 22644 / CIP 104116 / JCM 14847 / LMG 12228 / 1C / PRS 101 / PAO1).